Here is a 178-residue protein sequence, read N- to C-terminus: Large ribosomal subunit protein uL6 (178 aa).

The protein belongs to the universal ribosomal protein uL6 family. Part of the 50S ribosomal subunit.

Its function is as follows. This protein binds to the 23S rRNA, and is important in its secondary structure. It is located near the subunit interface in the base of the L7/L12 stalk, and near the tRNA binding site of the peptidyltransferase center. The protein is Large ribosomal subunit protein uL6 of Shouchella clausii (strain KSM-K16) (Alkalihalobacillus clausii).